We begin with the raw amino-acid sequence, 119 residues long: Short coiled-coil protein A (119 aa).

The segment covering M1 to G10 has biased composition (acidic residues). Residues M1–P26 form a disordered region. Residues M48–L95 adopt a coiled-coil conformation.

It belongs to the SCOC family.

The protein localises to the golgi apparatus membrane. Its subcellular location is the golgi apparatus. It localises to the trans-Golgi network. The protein resides in the cytoplasm. It is found in the cytosol. Positive regulator of amino acid starvation-induced autophagy. This Danio rerio (Zebrafish) protein is Short coiled-coil protein A (scoca).